The sequence spans 511 residues: Histidine ammonia-lyase (511 aa).

The segment at residues Ala143–Gly145 is a cross-link (5-imidazolinone (Ala-Gly)). Position 144 is a 2,3-didehydroalanine (Ser) (Ser144).

The protein belongs to the PAL/histidase family. In terms of processing, contains an active site 4-methylidene-imidazol-5-one (MIO), which is formed autocatalytically by cyclization and dehydration of residues Ala-Ser-Gly.

It localises to the cytoplasm. The enzyme catalyses L-histidine = trans-urocanate + NH4(+). Its pathway is amino-acid degradation; L-histidine degradation into L-glutamate; N-formimidoyl-L-glutamate from L-histidine: step 1/3. This is Histidine ammonia-lyase from Vibrio parahaemolyticus serotype O3:K6 (strain RIMD 2210633).